We begin with the raw amino-acid sequence, 442 residues long: MPVHFNQSVGMPPARDGARPPPIKGGLMGKLIPATYSPNGRHPRIAPPPPPTPPAGAGAGAGAAPPQRQLLQHSPTTAPGPRRPSNPSSPQHPQQPGIDRFPQIIPYQHEQPQRRPSRQQYSASPPVDYSFGKGPKQSGLDQSSSTSSSVSPKQEMKQMSIHNLLSSGDQDDQDDKSINNSNTARASSASLASLASPRSVLPPAAMPSPSPSFSTSEYHLHVRQQPVAARSCGFGERDRRVIDPPPIVQMTIDDPSATPDQMQQRLRHPFSVVHCSIYNETGEEDNSAMPEDYRQQRRLMGTLVASPFVGKDENGEDGCFFCFPDLSCRTPGSFRLKFSLVVINPADMRQGLRTPIAATAMSDVLVVYNAKDFPGMQASTPLTRKLKEQGCLISIKKGNEKGGGGGGGGPSGSRDQYSDDEYDDDGGGGSGRAGKRKRIRRS.

Disordered stretches follow at residues 1–192 (MPVH…ASLA) and 396–442 (KKGN…IRRS). Residues 45–54 (IAPPPPPTPP) are compositionally biased toward pro residues. Over residues 79–97 (PGPRRPSNPSSPQHPQQPG) the composition is skewed to low complexity. A Velvet domain is found at 213–396 (FSTSEYHLHV…KEQGCLISIK (184 aa)). A compositionally biased stretch (gly residues) spans 401–411 (KGGGGGGGGPS). Over residues 433–442 (AGKRKRIRRS) the composition is skewed to basic residues.

Belongs to the velvet family. VelC subfamily.

Its subcellular location is the nucleus. Functionally, velvet-domain-containing protein that acts as a positive regulator of sexual development. Plays an important role in pathogenicity through regulating positively appressorium-mediated penetration and invasive growth. The chain is Sexual development regulator VELC from Pyricularia oryzae (strain 70-15 / ATCC MYA-4617 / FGSC 8958) (Rice blast fungus).